The following is a 118-amino-acid chain: Large ribosomal subunit protein bL20 (118 aa).

Belongs to the bacterial ribosomal protein bL20 family.

In terms of biological role, binds directly to 23S ribosomal RNA and is necessary for the in vitro assembly process of the 50S ribosomal subunit. It is not involved in the protein synthesizing functions of that subunit. This chain is Large ribosomal subunit protein bL20, found in Aliarcobacter butzleri (strain RM4018) (Arcobacter butzleri).